Here is a 165-residue protein sequence, read N- to C-terminus: Small ribosomal subunit protein uS5 (165 aa).

Residues Leu-10–Val-73 form the S5 DRBM domain.

This sequence belongs to the universal ribosomal protein uS5 family. Part of the 30S ribosomal subunit. Contacts proteins S4 and S8.

Functionally, with S4 and S12 plays an important role in translational accuracy. Located at the back of the 30S subunit body where it stabilizes the conformation of the head with respect to the body. The chain is Small ribosomal subunit protein uS5 from Clostridium novyi (strain NT).